The primary structure comprises 465 residues: Phosphomethylpyrimidine synthase (465 aa).

Substrate-binding positions include N80, M109, Y139, H175, 195 to 197, 236 to 239, and E275; these read SRG and DSLR. A Zn(2+)-binding site is contributed by H279. Residue Y302 participates in substrate binding. H343 contacts Zn(2+). [4Fe-4S] cluster is bound by residues C423, C426, and C431.

This sequence belongs to the ThiC family. [4Fe-4S] cluster serves as cofactor.

The enzyme catalyses 5-amino-1-(5-phospho-beta-D-ribosyl)imidazole + S-adenosyl-L-methionine = 4-amino-2-methyl-5-(phosphooxymethyl)pyrimidine + CO + 5'-deoxyadenosine + formate + L-methionine + 3 H(+). It participates in cofactor biosynthesis; thiamine diphosphate biosynthesis. Functionally, catalyzes the synthesis of the hydroxymethylpyrimidine phosphate (HMP-P) moiety of thiamine from aminoimidazole ribotide (AIR) in a radical S-adenosyl-L-methionine (SAM)-dependent reaction. The chain is Phosphomethylpyrimidine synthase from Synechococcus sp. (strain CC9311).